The following is a 774-amino-acid chain: Alpha,alpha-trehalose phosphorylase (774 aa).

369–370 serves as a coordination point for substrate; the sequence is WD. Residue E498 is the Proton donor of the active site. Residue 610–611 participates in substrate binding; it reads KQ.

Belongs to the glycosyl hydrolase 65 family. As to quaternary structure, homodimer.

It catalyses the reaction alpha,alpha-trehalose + phosphate = beta-D-glucose 1-phosphate + D-glucose. Its pathway is glycan degradation; trehalose degradation. Inhibited by Cu(2+), Hg(2+), Mg(2+), Mn(2+), Pb(2+) and Zn(2+). In terms of biological role, catalyzes the reversible phosphorolytic cleavage of trehalose. Phosphorolysis is specific for trehalose, but D-xylose, D-galactose, L-arabinose, D-fucose, L-fucose, D-glucosamine and 2-deoxy D-glucose can act as substitutes for D-glucose in the synthetic reaction. This Thermoanaerobacter brockii (Thermoanaerobium brockii) protein is Alpha,alpha-trehalose phosphorylase (treP).